Here is an 876-residue protein sequence, read N- to C-terminus: MVKEKKKADKKGDKSARSPSSISDNPEASKQDSNASKQEVAPSAVVPVVETPLKQAPKRDSVQMEQSEEETQYEEPILTKLIVESYEGEKVRGLYEGEGFAVFQGGNTYHGMFSEGLMHGQGTYIWADGLKYEGDFVKNIPMNHGVYTWPDGSTYEGEVTNGMRNGFGMFKCGTQPVSYIGHWCHGKRHGKGSIYYNQEGTSWYEGDWVYNIKKGWGIRCYKSGNIYEGQWENNMRHGEGRMRWLTTNEEYTGHWEKGIQNGFGTHTWFLKRIPNSQYPLRNEYIGEFVNGFRHGQGKFYYASGAMYEGEWASNKKQGRGRMTFKNGHVYEGLFSNDHIAQFFETEMDYSQSLDRWSDASQRSRQPRGSSVSAVREPETLRKLDGSESRSVLGTSIELDLTLLLDMYPEESQEEEKKQVEYAVLRNITELRRIYCFYSGLGCDHSLDNTFLMTKLHFWRFLKDCRFHHHNITLADMDRVLSVYNGIPIEEIHSPFRTILLRTFLNYLLQLAYYIHHKEFQNRSPSLFLCFTKLMSENIHPHACQVKGHLFSEQQRTLYSMNYIDKCWEIYTAYCRPNEAPPYELTMKMRYFLWMLKDFRMINKDLTATKFMTVIAEDNPFVYDGTDSNFELELVFLEFFEALLCFSLCCMFDQMTRSYLKVPYDDITTNRYGSTQTILNQSIHRSPSAITSHDSEVHFSSTKSSLDKIGALPDGKIRQSEPKLKKSLSEDKVSKMNFKTQGRGLVFMSPQGEKYEKPKDEQKEKLNIWVNNLYVFFVSVLFSAYKREEMLKEKVKENQLQEAELAQQRQIENEELEARLNILREEEARKQDFELDITVLKEPSEIPASQPLTPSPPKEDLASIQTSKASPGKKKKK.

A compositionally biased stretch (basic and acidic residues) spans 1 to 16; sequence MVKEKKKADKKGDKSA. Positions 1–71 are disordered; it reads MVKEKKKADK…VQMEQSEEET (71 aa). Residues 17 to 37 are compositionally biased toward polar residues; the sequence is RSPSSISDNPEASKQDSNASK. The segment covering 39–50 has biased composition (low complexity); it reads EVAPSAVVPVVE. MORN repeat units lie at residues 86 to 108, 109 to 129, 132 to 154, 155 to 172, 179 to 196, 204 to 225, 227 to 244, 251 to 268, 284 to 305, and 307 to 328; these read YEGEKVRGLYEGEGFAVFQGGNT, YHGMFSEGLMHGQGTYIWADG, YEGDFVKNIPMNHGVYTWPDGST, YEGEVTNGMRNGFGMFKC, YIGHWCHGKRHGKGSIYY, YEGDWVYNIKKGWGIRCYKSGN, YEGQWENNMRHGEGRMRW, YTGHWEKGIQNGFGTHTW, YIGEFVNGFRHGQGKFYYASGA, and YEGEWASNKKQGRGRMTFKNGH. Over residues 356-372 the composition is skewed to polar residues; it reads WSDASQRSRQPRGSSVS. Residues 356 to 386 form a disordered region; that stretch reads WSDASQRSRQPRGSSVSAVREPETLRKLDGS. A compositionally biased stretch (basic and acidic residues) spans 375 to 386; that stretch reads REPETLRKLDGS. The stretch at 790–832 forms a coiled coil; it reads LKEKVKENQLQEAELAQQRQIENEELEARLNILREEEARKQDF. A disordered region spans residues 839–876; it reads LKEPSEIPASQPLTPSPPKEDLASIQTSKASPGKKKKK.

As to quaternary structure, interacts with RSPH6A. Does not appear to be part of the axonemal radial spoke complexes 1 or 2. Expressed in ependymal cells (at protein level).

The protein resides in the cytoplasm. It is found in the cytoskeleton. Its subcellular location is the cilium axoneme. It localises to the cell projection. The protein localises to the cilium. The protein resides in the flagellum. May function as part of the axonemal radial spoke complex 3 (RS3). Radial spoke complexes are important for ciliary motility. This Mus musculus (Mouse) protein is Radial spoke head 10 homolog B.